Consider the following 582-residue polypeptide: 2-succinyl-5-enolpyruvyl-6-hydroxy-3-cyclohexene-1-carboxylate synthase (582 aa).

Belongs to the TPP enzyme family. MenD subfamily. In terms of assembly, homodimer. Mg(2+) is required as a cofactor. The cofactor is Mn(2+). Requires thiamine diphosphate as cofactor.

It carries out the reaction isochorismate + 2-oxoglutarate + H(+) = 5-enolpyruvoyl-6-hydroxy-2-succinyl-cyclohex-3-ene-1-carboxylate + CO2. It functions in the pathway quinol/quinone metabolism; 1,4-dihydroxy-2-naphthoate biosynthesis; 1,4-dihydroxy-2-naphthoate from chorismate: step 2/7. It participates in cofactor biosynthesis; phylloquinone biosynthesis. Its function is as follows. Catalyzes the thiamine diphosphate-dependent decarboxylation of 2-oxoglutarate and the subsequent addition of the resulting succinic semialdehyde-thiamine pyrophosphate anion to isochorismate to yield 2-succinyl-5-enolpyruvyl-6-hydroxy-3-cyclohexene-1-carboxylate (SEPHCHC). The protein is 2-succinyl-5-enolpyruvyl-6-hydroxy-3-cyclohexene-1-carboxylate synthase of Prochlorococcus marinus (strain MIT 9313).